The sequence spans 398 residues: Inositol polyphosphate 5-phosphatase (398 aa).

It belongs to the inositol 1,4,5-trisphosphate 5-phosphatase type II family. In terms of tissue distribution, expressed in tail, cilia, dendrites, axon and male head.

The protein localises to the cytoplasm. Dephosphorylates a number of phosphatidylinositols. Controls the cellular levels and subcellular distribution of phosphatidylinositol 3,5-bisphosphate and phosphatidylinositol 3,4,5-trisphosphate. Has a role in sperm activation and motility. Influences the localization of the transient receptor potential polycystin (TRPP) complex proteins lov-1 and pkd-2. This is Inositol polyphosphate 5-phosphatase from Caenorhabditis elegans.